Reading from the N-terminus, the 301-residue chain is Lysozyme-like protein 3 (301 aa).

The first 15 residues, 1 to 15 (MKLFALLVSITLCYS), serve as a signal peptide directing secretion. Residues 64–282 (HAYSVDISFH…HLSQIVHFST (219 aa)) form the Ch-type lysozyme domain.

The protein belongs to the glycosyl hydrolase 25 family.

Plays a role in the stress response to heavy metals such as copper, probably in a kgb-1-dependent manner. The chain is Lysozyme-like protein 3 from Caenorhabditis elegans.